The chain runs to 91 residues: uncharacterized protein (91 aa).

It is found in the plastid. Its subcellular location is the chloroplast. This is an uncharacterized protein from Phalaenopsis aphrodite subsp. formosana (Moth orchid).